The primary structure comprises 193 residues: Phosphoheptose isomerase (193 aa).

An SIS domain is found at 37 to 193; it reads LADSFKAGGK…QLIEKEMVKA (157 aa). 52–54 is a binding site for substrate; sequence NGG. Zn(2+) is bound by residues His61 and Glu65. Substrate is bound by residues Glu65, 93–94, 119–121, Ser124, and Gln172; these read ND and STS. Residues Gln172 and His180 each coordinate Zn(2+).

It belongs to the SIS family. GmhA subfamily. Homotetramer. The cofactor is Zn(2+).

The protein resides in the cytoplasm. It carries out the reaction 2 D-sedoheptulose 7-phosphate = D-glycero-alpha-D-manno-heptose 7-phosphate + D-glycero-beta-D-manno-heptose 7-phosphate. The protein operates within carbohydrate biosynthesis; D-glycero-D-manno-heptose 7-phosphate biosynthesis; D-glycero-alpha-D-manno-heptose 7-phosphate and D-glycero-beta-D-manno-heptose 7-phosphate from sedoheptulose 7-phosphate: step 1/1. Its pathway is bacterial outer membrane biogenesis; LPS core biosynthesis. Its function is as follows. Catalyzes the isomerization of sedoheptulose 7-phosphate in D-glycero-D-manno-heptose 7-phosphate. The polypeptide is Phosphoheptose isomerase (Yersinia pestis).